The sequence spans 873 residues: Probable beta-glucosidase A (873 aa).

The N-terminal stretch at 1-19 is a signal peptide; the sequence is MRFGWLEVAALTAASVANA. 3 N-linked (GlcNAc...) asparagine glycosylation sites follow: Asn71, Asn222, and Asn263. Asp291 is an active-site residue. Residues Asn326, Asn333, Asn365, Asn453, Asn534, Asn553, Asn575, Asn679, and Asn725 are each glycosylated (N-linked (GlcNAc...) asparagine). Residues 731–764 form a disordered region; the sequence is DSSDDPNYGWEDSEYIPEGARDGSPQPLLKAGGA.

Belongs to the glycosyl hydrolase 3 family.

It localises to the secreted. It catalyses the reaction Hydrolysis of terminal, non-reducing beta-D-glucosyl residues with release of beta-D-glucose.. It functions in the pathway glycan metabolism; cellulose degradation. Beta-glucosidases are one of a number of cellulolytic enzymes involved in the degradation of cellulosic biomass. Catalyzes the last step releasing glucose from the inhibitory cellobiose. In Aspergillus fumigatus (strain CBS 144.89 / FGSC A1163 / CEA10) (Neosartorya fumigata), this protein is Probable beta-glucosidase A (bglA).